The chain runs to 157 residues: MLKTTQKSLLIFIVVFSLIFGTDQAIKYAILEGFRYESLIIDIVLVFNKGVAFSLLSFLEGGLKYLQILLILGLFIFLMCQKELFKNHAIEFGMVFGAGVSNVLDRFVHGGVVDYVYYHYGFDFAIFNFADVMIDVGVGVLLLRQFFFKQKQNKIKA.

3 helical membrane passes run 10-30, 58-78, and 84-104; these read LIFI…KYAI, FLEG…FIFL, and LFKN…SNVL. Active-site residues include Asp-114 and Asp-131. The chain crosses the membrane as a helical span at residues 122–142; the sequence is FDFAIFNFADVMIDVGVGVLL.

Belongs to the peptidase A8 family.

It localises to the cell inner membrane. The catalysed reaction is Release of signal peptides from bacterial membrane prolipoproteins. Hydrolyzes -Xaa-Yaa-Zaa-|-(S,diacylglyceryl)Cys-, in which Xaa is hydrophobic (preferably Leu), and Yaa (Ala or Ser) and Zaa (Gly or Ala) have small, neutral side chains.. It functions in the pathway protein modification; lipoprotein biosynthesis (signal peptide cleavage). Its function is as follows. This protein specifically catalyzes the removal of signal peptides from prolipoproteins. This is Lipoprotein signal peptidase from Helicobacter pylori (strain Shi470).